Reading from the N-terminus, the 461-residue chain is Siroheme synthase (461 aa).

Residues 1–204 (MRYLPLFVYL…GNFRKANRVI (204 aa)) form a precorrin-2 dehydrogenase /sirohydrochlorin ferrochelatase region. NAD(+) contacts are provided by residues 22 to 23 (IV) and 43 to 44 (KT). Residue S128 is modified to Phosphoserine. Residues 218 to 461 (GSVSLVGAGP…HNEISWFGNG (244 aa)) are uroporphyrinogen-III C-methyltransferase. An S-adenosyl-L-methionine-binding site is contributed by P227. D250 (proton acceptor) is an active-site residue. Catalysis depends on K272, which acts as the Proton donor. S-adenosyl-L-methionine is bound by residues 303–305 (GGD), I308, M386, and G415.

It in the N-terminal section; belongs to the precorrin-2 dehydrogenase / sirohydrochlorin ferrochelatase family. The protein in the C-terminal section; belongs to the precorrin methyltransferase family.

The catalysed reaction is uroporphyrinogen III + 2 S-adenosyl-L-methionine = precorrin-2 + 2 S-adenosyl-L-homocysteine + H(+). It carries out the reaction precorrin-2 + NAD(+) = sirohydrochlorin + NADH + 2 H(+). The enzyme catalyses siroheme + 2 H(+) = sirohydrochlorin + Fe(2+). The protein operates within cofactor biosynthesis; adenosylcobalamin biosynthesis; precorrin-2 from uroporphyrinogen III: step 1/1. It functions in the pathway cofactor biosynthesis; adenosylcobalamin biosynthesis; sirohydrochlorin from precorrin-2: step 1/1. It participates in porphyrin-containing compound metabolism; siroheme biosynthesis; precorrin-2 from uroporphyrinogen III: step 1/1. Its pathway is porphyrin-containing compound metabolism; siroheme biosynthesis; siroheme from sirohydrochlorin: step 1/1. The protein operates within porphyrin-containing compound metabolism; siroheme biosynthesis; sirohydrochlorin from precorrin-2: step 1/1. Its function is as follows. Multifunctional enzyme that catalyzes the SAM-dependent methylations of uroporphyrinogen III at position C-2 and C-7 to form precorrin-2 via precorrin-1. Then it catalyzes the NAD-dependent ring dehydrogenation of precorrin-2 to yield sirohydrochlorin. Finally, it catalyzes the ferrochelation of sirohydrochlorin to yield siroheme. In Blochmanniella floridana, this protein is Siroheme synthase.